The chain runs to 128 residues: Phosphoribosyl-AMP cyclohydrolase (128 aa).

Residue Asp77 participates in Mg(2+) binding. Residue Cys78 coordinates Zn(2+). Residues Asp79 and Asp81 each coordinate Mg(2+). Zn(2+) is bound by residues Cys95 and Cys102.

This sequence belongs to the PRA-CH family. Homodimer. It depends on Mg(2+) as a cofactor. Requires Zn(2+) as cofactor.

It is found in the cytoplasm. The catalysed reaction is 1-(5-phospho-beta-D-ribosyl)-5'-AMP + H2O = 1-(5-phospho-beta-D-ribosyl)-5-[(5-phospho-beta-D-ribosylamino)methylideneamino]imidazole-4-carboxamide. The protein operates within amino-acid biosynthesis; L-histidine biosynthesis; L-histidine from 5-phospho-alpha-D-ribose 1-diphosphate: step 3/9. Catalyzes the hydrolysis of the adenine ring of phosphoribosyl-AMP. This Methylococcus capsulatus (strain ATCC 33009 / NCIMB 11132 / Bath) protein is Phosphoribosyl-AMP cyclohydrolase.